The following is a 229-amino-acid chain: Flagellar L-ring protein (229 aa).

Residues 1 to 25 (MKQVRLLPPAPVRAVCALAVAALAG) form the signal peptide. Cys-26 carries N-palmitoyl cysteine lipidation. Cys-26 is lipidated: S-diacylglycerol cysteine.

It belongs to the FlgH family. As to quaternary structure, the basal body constitutes a major portion of the flagellar organelle and consists of four rings (L,P,S, and M) mounted on a central rod.

The protein resides in the cell outer membrane. Its subcellular location is the bacterial flagellum basal body. Its function is as follows. Assembles around the rod to form the L-ring and probably protects the motor/basal body from shearing forces during rotation. The chain is Flagellar L-ring protein from Burkholderia ambifaria (strain ATCC BAA-244 / DSM 16087 / CCUG 44356 / LMG 19182 / AMMD) (Burkholderia cepacia (strain AMMD)).